A 100-amino-acid polypeptide reads, in one-letter code: Putative pterin-4-alpha-carbinolamine dehydratase 2 (100 aa).

This sequence belongs to the pterin-4-alpha-carbinolamine dehydratase family.

It carries out the reaction (4aS,6R)-4a-hydroxy-L-erythro-5,6,7,8-tetrahydrobiopterin = (6R)-L-erythro-6,7-dihydrobiopterin + H2O. This Cupriavidus pinatubonensis (strain JMP 134 / LMG 1197) (Cupriavidus necator (strain JMP 134)) protein is Putative pterin-4-alpha-carbinolamine dehydratase 2.